The chain runs to 235 residues: 7-cyano-7-deazaguanine synthase (235 aa).

Residue 12–22 (FSGGQDSTTCL) participates in ATP binding. Residues C200, C215, C218, and C221 each coordinate Zn(2+).

It belongs to the QueC family. The cofactor is Zn(2+).

The enzyme catalyses 7-carboxy-7-deazaguanine + NH4(+) + ATP = 7-cyano-7-deazaguanine + ADP + phosphate + H2O + H(+). Its pathway is purine metabolism; 7-cyano-7-deazaguanine biosynthesis. In terms of biological role, catalyzes the ATP-dependent conversion of 7-carboxy-7-deazaguanine (CDG) to 7-cyano-7-deazaguanine (preQ(0)). This chain is 7-cyano-7-deazaguanine synthase, found in Leptothrix cholodnii (strain ATCC 51168 / LMG 8142 / SP-6) (Leptothrix discophora (strain SP-6)).